The chain runs to 756 residues: Photosystem I P700 chlorophyll a apoprotein A1 (756 aa).

Helical transmembrane passes span 73 to 96 (IFSAHFGHLAVIFVWLSGMYFHGA), 159 to 182 (LYVTAIGGLVMAGLMLFAGWFHYH), 198 to 222 (MNHHLAGLLGLGSLGWAGHQIHVSL), 298 to 316 (TAHHHLAIAVLFIIAGHMY), 353 to 376 (WHAQLAINLAMMGSLSIIVAHHMY), 392 to 418 (LSLFTHHMWIGGFLIVGGAAHGAIYMV), 440 to 462 (AIISHLNWVCIFLGFHSFGLYIH), and 537 to 555 (FLVHHIHAFTIHVTVLILL). Residues C579 and C588 each contribute to the [4Fe-4S] cluster site. The next 2 membrane-spanning stretches (helical) occupy residues 595 to 616 (HVFLGLFWMYNSLSIVIFHFSW) and 670 to 692 (LSAYGLLFLGAHFVWAFSLMFLF). Chlorophyll a' is bound at residue H681. Chlorophyll a contacts are provided by M689 and Y697. Phylloquinone is bound at residue W698. The chain crosses the membrane as a helical span at residues 730-750 (AVGVAHYLLGGIATTWAFFLA).

This sequence belongs to the PsaA/PsaB family. In terms of assembly, the PsaA/B heterodimer binds the P700 chlorophyll special pair and subsequent electron acceptors. PSI consists of a core antenna complex that captures photons, and an electron transfer chain that converts photonic excitation into a charge separation. The cyanobacterial PSI reaction center is composed of one copy each of PsaA,B,C,D,E,F,I,J,K,L,M and X, and forms trimeric complexes. The cofactor is PSI electron transfer chain: 5 chlorophyll a, 1 chlorophyll a', 2 phylloquinones and 3 4Fe-4S clusters. PSI core antenna: 90 chlorophyll a, 22 carotenoids, 3 phospholipids and 1 galactolipid. P700 is a chlorophyll a/chlorophyll a' dimer, A0 is one or more chlorophyll a, A1 is one or both phylloquinones and FX is a shared 4Fe-4S iron-sulfur center..

It localises to the cellular thylakoid membrane. It catalyses the reaction reduced [plastocyanin] + hnu + oxidized [2Fe-2S]-[ferredoxin] = oxidized [plastocyanin] + reduced [2Fe-2S]-[ferredoxin]. Functionally, psaA and PsaB bind P700, the primary electron donor of photosystem I (PSI), as well as the electron acceptors A0, A1 and FX. PSI is a plastocyanin/cytochrome c6-ferredoxin oxidoreductase, converting photonic excitation into a charge separation, which transfers an electron from the donor P700 chlorophyll pair to the spectroscopically characterized acceptors A0, A1, FX, FA and FB in turn. Oxidized P700 is reduced on the lumenal side of the thylakoid membrane by plastocyanin or cytochrome c6. The protein is Photosystem I P700 chlorophyll a apoprotein A1 of Cyanothece sp. (strain PCC 7425 / ATCC 29141).